A 147-amino-acid chain; its full sequence is MALQRTHSLLLLLLLTLLGLGLVQPSYGQDGMYQRFLRQHVHPEETGGNDRYCNLMMQRRKMTLYHCKRFNTFIHEDIWNIRSICSTTNIQCKNGKTNCHEGVVKVTDCRDTGSSRAPNCRYRAMASTRRVVIACEGNPQVPVHFDG.

An N-terminal signal peptide occupies residues 1-28; that stretch reads MALQRTHSLLLLLLLTLLGLGLVQPSYG. A Pyrrolidone carboxylic acid modification is found at Gln29. DUMP contacts are provided by Arg35, His40, Lys68, Asn71, and Thr72. His40 (proton acceptor) is an active-site residue. 4 cysteine pairs are disulfide-bonded: Cys53-Cys109, Cys67-Cys120, Cys85-Cys135, and Cys92-Cys99. His144 functions as the Proton donor in the catalytic mechanism. Phe145 provides a ligand contact to dUMP.

This sequence belongs to the pancreatic ribonuclease family.

Its subcellular location is the secreted. Its function is as follows. Cleaves preferentially after uridine bases. Has antimicrobial activity against uropathogenic E.coli (UPEC). Probably contributes to urinary tract sterility. The polypeptide is Ribonuclease 4 (RNASE4) (Pongo abelii (Sumatran orangutan)).